Here is an 892-residue protein sequence, read N- to C-terminus: Translation initiation factor IF-2 (892 aa).

Residues 51–296 are disordered; it reads REHGSAPNKL…KGKRKPSTLQ (246 aa). The span at 68–82 shows a compositional bias: polar residues; the sequence is STLNIPSTGGKSKSV. A compositionally biased stretch (basic and acidic residues) spans 99 to 217; that stretch reads EQAKAEEQAQ…KMAAENEGKW (119 aa). A compositionally biased stretch (polar residues) spans 224 to 237; it reads QTESADYHVTTSQH. Over residues 239-254 the composition is skewed to basic and acidic residues; that stretch reads RAAEDENDAKVEGDRR. Residues 255-269 show a composition bias toward basic residues; that stretch reads SRTRGGKATKQKKGN. Basic and acidic residues predominate over residues 270 to 283; it reads KLSESKADREEARA. The region spanning 391–560 is the tr-type G domain; the sequence is HRAPVVTIMG…LLQAEVMELK (170 aa). The segment at 400–407 is G1; it reads GHVDHGKT. 400-407 lines the GTP pocket; that stretch reads GHVDHGKT. A G2 region spans residues 425–429; it reads GITQH. The tract at residues 446–449 is G3; it reads DTPG. Residues 446–450 and 500–503 each bind GTP; these read DTPGH and NKID. The G4 stretch occupies residues 500-503; the sequence is NKID. A G5 region spans residues 536–538; that stretch reads SAK.

This sequence belongs to the TRAFAC class translation factor GTPase superfamily. Classic translation factor GTPase family. IF-2 subfamily.

It localises to the cytoplasm. Its function is as follows. One of the essential components for the initiation of protein synthesis. Protects formylmethionyl-tRNA from spontaneous hydrolysis and promotes its binding to the 30S ribosomal subunits. Also involved in the hydrolysis of GTP during the formation of the 70S ribosomal complex. The sequence is that of Translation initiation factor IF-2 from Yersinia enterocolitica serotype O:8 / biotype 1B (strain NCTC 13174 / 8081).